A 1127-amino-acid chain; its full sequence is Nck-associated protein 1-like (1127 aa).

The disordered stretch occupies residues 638–670; that stretch reads KAKNKKTRKQRQTPRKGEPERDKPGAESHRKNR. A compositionally biased stretch (basic residues) spans 639–651; sequence AKNKKTRKQRQTP. Residues 652–666 show a composition bias toward basic and acidic residues; it reads RKGEPERDKPGAESH. The chain crosses the membrane as a helical span at residues 996-1016; it reads VACLLLIFLAVSLPLLATDPS.

It belongs to the HEM-1/HEM-2 family. In hematopoietic cells, component of the WAVE2 complex composed of ABI1, CYFIP1/SRA1, NCKAP1L/HEM1 and WASF2/WAVE2. Interacts with ARHGAP4, PIK3C3/VPS34 and PPP1R12A/MYPT1. Interacts with mammalian target of rapamycin complex 2 (mTORC2) components, including MTOR and RICTOR. As to expression, expressed only in cells of hematopoietic origin. Expressed in neutrophils (at protein level). Expressed in T-cells (at protein level).

The protein resides in the cell membrane. It is found in the cytoplasm. Essential hematopoietic-specific regulator of the actin cytoskeleton. Controls lymphocyte development, activation, proliferation and homeostasis, erythrocyte membrane stability, as well as phagocytosis and migration by neutrophils and macrophages. Component of the WAVE2 complex which signals downstream of RAC to stimulate F-actin polymerization. Required for stabilization and/or translation of the WAVE2 complex proteins in hematopoietic cells. Within the WAVE2 complex, enables the cortical actin network to restrain excessive degranulation and granule release by T-cells. Required for efficient T-lymphocyte and neutrophil migration. Exhibits complex cycles of activation and inhibition to generate waves of propagating the assembly with actin. Also involved in mechanisms WAVE-independent to regulate myosin and actin polymerization during neutrophil chemotaxis. In T-cells, required for proper mechanistic target of rapamycin complex 2 (mTORC2)-dependent AKT phosphorylation, cell proliferation and cytokine secretion, including that of IL2 and TNF. In Homo sapiens (Human), this protein is Nck-associated protein 1-like.